We begin with the raw amino-acid sequence, 105 residues long: Small ribosomal subunit protein eS24 (105 aa).

Belongs to the eukaryotic ribosomal protein eS24 family.

The polypeptide is Small ribosomal subunit protein eS24 (Haloquadratum walsbyi (strain DSM 16790 / HBSQ001)).